A 121-amino-acid polypeptide reads, in one-letter code: Ragulator complex protein LAMTOR4 homolog (121 aa).

The interval 91 to 121 is disordered; the sequence is TQNGATTSSSSSTSYNDAAEGNNISSSTVLA. The span at 112-121 shows a compositional bias: polar residues; the sequence is NNISSSTVLA.

Belongs to the LAMTOR4 family. As to quaternary structure, part of the Ragulator complex.

The protein resides in the lysosome. Regulator of the TOR pathway, a signaling cascade that promotes cell growth in response to growth factors, energy levels, and amino acids. As part of the Ragulator complex, may activate the TOR signaling cascade in response to amino acids. This chain is Ragulator complex protein LAMTOR4 homolog, found in Drosophila pseudoobscura pseudoobscura (Fruit fly).